The primary structure comprises 64 residues: Large ribosomal subunit protein bL35 (64 aa).

Basic residues predominate over residues 1–24; that stretch reads MPKMKSHRGACKRFKKTASGKVKR. Positions 1-64 are disordered; it reads MPKMKSHRGA…EKQIKRMILA (64 aa). The span at 25–35 shows a compositional bias: basic and acidic residues; sequence ERMYGSHNLEK. The span at 36–45 shows a compositional bias: basic residues; sequence KNRKRTRRLH.

It belongs to the bacterial ribosomal protein bL35 family.

The protein is Large ribosomal subunit protein bL35 of Prosthecochloris aestuarii (strain DSM 271 / SK 413).